Consider the following 550-residue polypeptide: Glucose-6-phosphate isomerase (550 aa).

Glu357 acts as the Proton donor in catalysis. Catalysis depends on residues His389 and Lys509.

The protein belongs to the GPI family.

The protein resides in the cytoplasm. It catalyses the reaction alpha-D-glucose 6-phosphate = beta-D-fructose 6-phosphate. It functions in the pathway carbohydrate biosynthesis; gluconeogenesis. It participates in carbohydrate degradation; glycolysis; D-glyceraldehyde 3-phosphate and glycerone phosphate from D-glucose: step 2/4. Its function is as follows. Catalyzes the reversible isomerization of glucose-6-phosphate to fructose-6-phosphate. The polypeptide is Glucose-6-phosphate isomerase (Anaeromyxobacter dehalogenans (strain 2CP-C)).